The primary structure comprises 588 residues: Probable metalloprotease ARX1 (588 aa).

It belongs to the peptidase M24 family. Component of the nucleoplasmic and cytoplasmic pre-60S ribosomal particles.

It is found in the cytoplasm. The protein localises to the nucleus. In terms of biological role, probable metalloprotease involved in proper assembly of pre-ribosomal particles during the biogenesis of the 60S ribosomal subunit. Accompanies the pre-60S particles to the cytoplasm. This is Probable metalloprotease ARX1 (ARX1) from Candida glabrata (strain ATCC 2001 / BCRC 20586 / JCM 3761 / NBRC 0622 / NRRL Y-65 / CBS 138) (Yeast).